A 434-amino-acid polypeptide reads, in one-letter code: Ribosomal protein uS12 methylthiotransferase RimO (434 aa).

The region spanning 9 to 125 (PAIFLLSLGC…VLAAIGAKYR (117 aa)) is the MTTase N-terminal domain. [4Fe-4S] cluster contacts are provided by cysteine 18, cysteine 54, cysteine 88, cysteine 149, cysteine 153, and cysteine 156. A Radical SAM core domain is found at 135–364 (LTPPHYAFLK…MELQEGISAS (230 aa)). Positions 367–434 (RKLEGQTLKV…AYELFGRISG (68 aa)) constitute a TRAM domain.

The protein belongs to the methylthiotransferase family. RimO subfamily. It depends on [4Fe-4S] cluster as a cofactor.

Its subcellular location is the cytoplasm. It catalyses the reaction L-aspartate(89)-[ribosomal protein uS12]-hydrogen + (sulfur carrier)-SH + AH2 + 2 S-adenosyl-L-methionine = 3-methylsulfanyl-L-aspartate(89)-[ribosomal protein uS12]-hydrogen + (sulfur carrier)-H + 5'-deoxyadenosine + L-methionine + A + S-adenosyl-L-homocysteine + 2 H(+). Catalyzes the methylthiolation of an aspartic acid residue of ribosomal protein uS12. This chain is Ribosomal protein uS12 methylthiotransferase RimO, found in Chlorobaculum tepidum (strain ATCC 49652 / DSM 12025 / NBRC 103806 / TLS) (Chlorobium tepidum).